A 139-amino-acid polypeptide reads, in one-letter code: Small ribosomal subunit protein bS16 (139 aa).

Positions 84–139 (KGEPAPAPLLQPAEKAARPSFEAIGGEDEGKGEAITQKKKADKKDEAAAESSASEA) are disordered.

The protein belongs to the bacterial ribosomal protein bS16 family.

The polypeptide is Small ribosomal subunit protein bS16 (Streptomyces coelicolor (strain ATCC BAA-471 / A3(2) / M145)).